A 256-amino-acid chain; its full sequence is GDSL esterase/lipase At1g18120 (256 aa).

A signal peptide spans M1–A49. S67 serves as the catalytic Nucleophile. The N-linked (GlcNAc...) asparagine glycan is linked to N181.

Belongs to the 'GDSL' lipolytic enzyme family.

It localises to the secreted. The chain is GDSL esterase/lipase At1g18120 from Arabidopsis thaliana (Mouse-ear cress).